The sequence spans 112 residues: uncharacterized protein (112 aa).

The disordered stretch occupies residues 70-112 (GLYRGRRPPGRDAARPTTAILFAQGRPPLLDQRAPTRRGSHQR).

This is an uncharacterized protein from Homo sapiens (Human).